We begin with the raw amino-acid sequence, 96 residues long: Large ribosomal subunit protein bL27 (96 aa).

Residues 1–9 constitute a propeptide that is removed on maturation; it reads MLRLDLQFF.

This sequence belongs to the bacterial ribosomal protein bL27 family. The N-terminus is cleaved by ribosomal processing cysteine protease Prp.

This Anoxybacillus flavithermus (strain DSM 21510 / WK1) protein is Large ribosomal subunit protein bL27.